We begin with the raw amino-acid sequence, 734 residues long: Transcriptional regulator AacuB (734 aa).

The zn(2)-C6 fungal-type DNA-binding region spans 26 to 52 (CVLCQQRKIKCDRTFPCTNCVRAHVQC). The span at 86–107 (FDPLHTPTADHRSASDDGRDDL) shows a compositional bias: basic and acidic residues. The interval 86–122 (FDPLHTPTADHRSASDDGRDDLPEGAESEGTFGEREK) is disordered.

Its subcellular location is the nucleus. Transcriptional regulator; part of the gene cluster that mediates the biosynthesis of the tetrahydroxanthone dimer secalonic acid D. The protein is Transcriptional regulator AacuB of Aspergillus aculeatus (strain ATCC 16872 / CBS 172.66 / WB 5094).